The sequence spans 367 residues: Protein-glutamate methylesterase/protein-glutamine glutaminase (367 aa).

Residues 6-123 (RVLVVDDSAF…SLGIKQLADE (118 aa)) form the Response regulatory domain. At D57 the chain carries 4-aspartylphosphate. In terms of domain architecture, CheB-type methylesterase spans 165–361 (ISKKEIVVVI…DILLKKVNEY (197 aa)). Catalysis depends on residues S177, H204, and D303.

It belongs to the CheB family. In terms of processing, phosphorylated by CheA. Phosphorylation of the N-terminal regulatory domain activates the methylesterase activity.

The protein resides in the cytoplasm. It catalyses the reaction [protein]-L-glutamate 5-O-methyl ester + H2O = L-glutamyl-[protein] + methanol + H(+). The catalysed reaction is L-glutaminyl-[protein] + H2O = L-glutamyl-[protein] + NH4(+). Its function is as follows. Involved in chemotaxis. Part of a chemotaxis signal transduction system that modulates chemotaxis in response to various stimuli. Catalyzes the demethylation of specific methylglutamate residues introduced into the chemoreceptors (methyl-accepting chemotaxis proteins or MCP) by CheR. Also mediates the irreversible deamidation of specific glutamine residues to glutamic acid. This chain is Protein-glutamate methylesterase/protein-glutamine glutaminase, found in Caldanaerobacter subterraneus subsp. tengcongensis (strain DSM 15242 / JCM 11007 / NBRC 100824 / MB4) (Thermoanaerobacter tengcongensis).